A 144-amino-acid polypeptide reads, in one-letter code: Bacilliredoxin BCE33L1972 (144 aa).

This sequence belongs to the bacilliredoxin family.

The protein is Bacilliredoxin BCE33L1972 of Bacillus cereus (strain ZK / E33L).